Here is a 604-residue protein sequence, read N- to C-terminus: Phenylalanine--tRNA ligase beta subunit (604 aa).

The B5 domain occupies 327 to 402 (YFQEKREVAH…LGRTLDRFSP (76 aa)). Positions 380, 386, 389, and 390 each coordinate Mg(2+).

This sequence belongs to the phenylalanyl-tRNA synthetase beta subunit family. Type 2 subfamily. Tetramer of two alpha and two beta subunits. The cofactor is Mg(2+).

It localises to the cytoplasm. The catalysed reaction is tRNA(Phe) + L-phenylalanine + ATP = L-phenylalanyl-tRNA(Phe) + AMP + diphosphate + H(+). This Treponema pallidum subsp. pallidum (strain SS14) protein is Phenylalanine--tRNA ligase beta subunit.